A 552-amino-acid polypeptide reads, in one-letter code: Phosphoglucomutase (552 aa).

Ser143 functions as the Phosphoserine intermediate in the catalytic mechanism. Mg(2+)-binding residues include Ser143, Asp295, Asp297, and Asp299.

This sequence belongs to the phosphohexose mutase family. It depends on Mg(2+) as a cofactor.

The enzyme catalyses alpha-D-glucose 1-phosphate = alpha-D-glucose 6-phosphate. It functions in the pathway glycolipid metabolism; diglucosyl-diacylglycerol biosynthesis. Catalyzes the interconversion between glucose-6-phosphate and alpha-glucose-1-phosphate. This is the first step in the biosynthesis of diglucosyl-diacylglycerol (Glc2-DAG), i.e. the predominant glycolipid found in the S.aureus membrane, which is also used as a membrane anchor for lipoteichoic acid (LTA). The sequence is that of Phosphoglucomutase (pgcA) from Staphylococcus aureus (strain USA300).